A 310-amino-acid chain; its full sequence is MVVSMREGEIISLFMKHFERHSLGDDAGFIKLNNSWLLVTSDMLVWKTDVPDFMTPEDAGRKVVTMNVSDIAAMGGRPMAFFFSLAVPGDVSEDILRGIARGINEGSKVYKLKIVSGDTNEADDIIIDGGSLGIGKRLLLRSNAKPGDLVCVTGDLGRPLTALLLWMRGEKIPREIEEKARNPRARVEEGVKLSSLANSAIDISDGLSKELWEIANASNVRIIIEEERLPISDSVKEIVSDPVKVALASGEEFELLFTIPREKVEELDIDFKIIGRVEGGNGVYIKRGRKIEELEVLGWEHLAGGIDVEL.

The Mg(2+) site is built by Asp-26, Thr-40, Ser-41, and Asp-42. Asp-49 provides a ligand contact to substrate. 2 residues coordinate Mg(2+): Asp-70 and Asp-118. Residues 117–118 (GD) and Arg-141 contribute to the ATP site. Asp-202 lines the Mg(2+) pocket. Ser-204 lines the ATP pocket. Asp-205 is a Mg(2+) binding site. Positions 251 and 299 each coordinate substrate.

It belongs to the thiamine-monophosphate kinase family.

It carries out the reaction thiamine phosphate + ATP = thiamine diphosphate + ADP. It participates in cofactor biosynthesis; thiamine diphosphate biosynthesis; thiamine diphosphate from thiamine phosphate: step 1/1. Its function is as follows. Catalyzes the ATP-dependent phosphorylation of thiamine-monophosphate (TMP) to form thiamine-pyrophosphate (TPP), the active form of vitamin B1. The chain is Thiamine-monophosphate kinase from Pyrococcus abyssi (strain GE5 / Orsay).